The chain runs to 226 residues: Octanoyltransferase (226 aa).

Residues 37–220 (GTAGELIWLL…SFSKVFGPVE (184 aa)) form the BPL/LPL catalytic domain. Substrate contacts are provided by residues 76–83 (RGGQFTYH), 151–153 (AIG), and 164–166 (GIS). Cys182 acts as the Acyl-thioester intermediate in catalysis.

It belongs to the LipB family.

The protein resides in the cytoplasm. The catalysed reaction is octanoyl-[ACP] + L-lysyl-[protein] = N(6)-octanoyl-L-lysyl-[protein] + holo-[ACP] + H(+). The protein operates within protein modification; protein lipoylation via endogenous pathway; protein N(6)-(lipoyl)lysine from octanoyl-[acyl-carrier-protein]: step 1/2. Functionally, catalyzes the transfer of endogenously produced octanoic acid from octanoyl-acyl-carrier-protein onto the lipoyl domains of lipoate-dependent enzymes. Lipoyl-ACP can also act as a substrate although octanoyl-ACP is likely to be the physiological substrate. The polypeptide is Octanoyltransferase (Caulobacter vibrioides (strain ATCC 19089 / CIP 103742 / CB 15) (Caulobacter crescentus)).